Here is a 495-residue protein sequence, read N- to C-terminus: Telomere-binding protein subunit alpha (495 aa).

Over residues 1–13 (MSTAAKQNRSTSR) the composition is skewed to polar residues. Residues 1–31 (MSTAAKQNRSTSRVSKKKTAAPKEGAAKKSD) are disordered.

This sequence belongs to the telombin family. As to quaternary structure, heterodimer of an alpha and a beta subunit.

It is found in the nucleus. The protein resides in the chromosome. The protein localises to the telomere. In terms of biological role, may function as protective capping of the single-stranded telomeric overhang. May also participate in telomere length regulation during DNA replication. Binds specifically to the T4G4-containing extension on the 3'strand and protects this region of the telomere from nuclease digestion and chemical modification. The protein is Telomere-binding protein subunit alpha (MAC-56A) of Sterkiella nova (Ciliate).